A 684-amino-acid polypeptide reads, in one-letter code: Threonine--tRNA ligase (684 aa).

The region spanning 1–66 is the TGS domain; sequence MTAVASSAPA…DTDVEVTPVA (66 aa). Positions 261-567 are catalytic; it reads DHRKLGVELD…LTEHYAGAFP (307 aa). Residues Cys366, His417, and His544 each contribute to the Zn(2+) site.

Belongs to the class-II aminoacyl-tRNA synthetase family. Homodimer. The cofactor is Zn(2+).

Its subcellular location is the cytoplasm. The enzyme catalyses tRNA(Thr) + L-threonine + ATP = L-threonyl-tRNA(Thr) + AMP + diphosphate + H(+). Functionally, catalyzes the attachment of threonine to tRNA(Thr) in a two-step reaction: L-threonine is first activated by ATP to form Thr-AMP and then transferred to the acceptor end of tRNA(Thr). Also edits incorrectly charged L-seryl-tRNA(Thr). This chain is Threonine--tRNA ligase, found in Mycolicibacterium smegmatis (strain ATCC 700084 / mc(2)155) (Mycobacterium smegmatis).